A 396-amino-acid chain; its full sequence is Ribosomal RNA large subunit methyltransferase I (396 aa).

The 80-residue stretch at 2-81 (SVRLVLAKGR…ESIDIAFFSR (80 aa)) folds into the PUA domain.

Belongs to the methyltransferase superfamily. RlmI family.

It localises to the cytoplasm. The enzyme catalyses cytidine(1962) in 23S rRNA + S-adenosyl-L-methionine = 5-methylcytidine(1962) in 23S rRNA + S-adenosyl-L-homocysteine + H(+). Its function is as follows. Specifically methylates the cytosine at position 1962 (m5C1962) of 23S rRNA. The polypeptide is Ribosomal RNA large subunit methyltransferase I (Shigella boydii serotype 18 (strain CDC 3083-94 / BS512)).